Reading from the N-terminus, the 161-residue chain is Urease accessory protein UreE (161 aa).

A disordered region spans residues 138-161; that stretch reads RGAYHAHGGHSHDHGQGHHHHDHG.

Belongs to the UreE family.

The protein localises to the cytoplasm. Its function is as follows. Involved in urease metallocenter assembly. Binds nickel. Probably functions as a nickel donor during metallocenter assembly. This Agrobacterium fabrum (strain C58 / ATCC 33970) (Agrobacterium tumefaciens (strain C58)) protein is Urease accessory protein UreE.